The sequence spans 289 residues: MTSKIFKFFLTWWLTQQVTGLAVPFMLDMAPNAFDDQYESCVEDMEKKAPQLLQEDFNMNEELKLEWEKAEINWKEIKNSTSYPAGFHDFHGTALVAYTGNLAIDFNRAVRDFKKSPDNFHYKAFHYYLTRAVQLLNDQGCSLVYRGTKVMFEYTGKGSVRFGQFSSSSLTKRVALSSNFFSNHGTLFIIRTCLGVNIKEFSSFPREEEVLIPGYEVYHKVTAQNDNGYNEIFLDSPERKKSNFNCFYNGSAQTVNIDFSISGSRESCVSLFLVVLLGLLVQQLTLAEL.

Positions 1 to 20 are cleaved as a signal peptide; it reads MTSKIFKFFLTWWLTQQVTG. Cystine bridges form between C41/C246 and C141/C193. A TR mART core domain is found at 61–241; it reads EELKLEWEKA…IFLDSPERKK (181 aa). N79 carries N-linked (GlcNAc...) asparagine glycosylation. NAD(+) is bound by residues Y98, R146, and Q164. The active site involves R146. Residue S167 is part of the active site. An NAD(+)-binding site is contributed by S202. E209 is an active-site residue. A glycan (N-linked (GlcNAc...) asparagine) is linked at N249. The GPI-anchor amidated serine moiety is linked to residue S260. The propeptide at 261-289 is removed in mature form; sequence ISGSRESCVSLFLVVLLGLLVQQLTLAEL.

It belongs to the Arg-specific ADP-ribosyltransferase family. In terms of tissue distribution, expressed in spleen, intestine and thymus.

The protein localises to the cell membrane. The catalysed reaction is L-arginyl-[protein] + NAD(+) = N(omega)-(ADP-D-ribosyl)-L-arginyl-[protein] + nicotinamide + H(+). The enzyme catalyses NAD(+) + H2O = ADP-D-ribose + nicotinamide + H(+). Functionally, has both NAD(+) glycohydrolase and ADP-ribosyltransferase activity. The protein is T-cell ecto-ADP-ribosyltransferase 2 (Art2b) of Mus musculus (Mouse).